Consider the following 226-residue polypeptide: Pro-opiomelanocortin (226 aa).

Residues 1–22 (MVCAPWLLAVVVVCVCNPGVGG) form the signal peptide. Residues 23-97 (QCWDSSHCKD…DPEPHSDKRH (75 aa)) constitute a propeptide that is removed on maturation. The residue at position 98 (serine 98) is an N-acetylserine; in Corticotropin. Tyrosine 198 is subject to N-acetyltyrosine; in Beta-endorphin and Met-enkephalin.

The protein belongs to the POMC family. Post-translationally, specific enzymatic cleavages at paired basic residues yield the different active peptides.

It localises to the secreted. Its function is as follows. Stimulates the adrenal glands to release cortisol. Functionally, anorexigenic peptide. Increases the pigmentation of skin by increasing melanin production in melanocytes. In terms of biological role, increases the pigmentation of skin by increasing melanin production in melanocytes. Endogenous orexigenic opiate. Its function is as follows. Endogenous opiate. The chain is Pro-opiomelanocortin (pomc) from Oncorhynchus keta (Chum salmon).